Consider the following 243-residue polypeptide: Type III pantothenate kinase (243 aa).

6 to 13 (DIGNTVAK) contacts ATP. Substrate is bound by residues Tyr86 and 93 to 96 (GYDR). Catalysis depends on Asp95, which acts as the Proton acceptor. Asp116 serves as a coordination point for K(+). Residue Thr119 participates in ATP binding. Substrate is bound at residue Thr171.

Belongs to the type III pantothenate kinase family. In terms of assembly, homodimer. The cofactor is NH4(+). K(+) is required as a cofactor.

The protein resides in the cytoplasm. It catalyses the reaction (R)-pantothenate + ATP = (R)-4'-phosphopantothenate + ADP + H(+). It functions in the pathway cofactor biosynthesis; coenzyme A biosynthesis; CoA from (R)-pantothenate: step 1/5. Functionally, catalyzes the phosphorylation of pantothenate (Pan), the first step in CoA biosynthesis. This chain is Type III pantothenate kinase, found in Bacteroides fragilis (strain YCH46).